A 385-amino-acid chain; its full sequence is Aliphatic amidase expression-regulating protein (385 aa).

Homodimer. Forms a complex with AmiR.

Negatively regulates the expression of the aliphatic amidase operon. AmiC functions by inhibiting the action of AmiR at the protein level. It exhibits protein kinase activity. In Pseudomonas aeruginosa (strain ATCC 15692 / DSM 22644 / CIP 104116 / JCM 14847 / LMG 12228 / 1C / PRS 101 / PAO1), this protein is Aliphatic amidase expression-regulating protein (amiC).